We begin with the raw amino-acid sequence, 1944 residues long: Anaphase-promoting complex subunit 1 (1944 aa).

2 positions are modified to phosphoserine: S51 and S60. At T291 the chain carries Phosphothreonine. The interval 312 to 343 (ESPVASPFQNYSSIHSQSRSTSSPSLHSRSPS) is disordered. S313, S341, S343, S355, S362, S373, and S377 each carry phosphoserine. Residues 323 to 343 (SSIHSQSRSTSSPSLHSRSPS) show a composition bias toward low complexity. Residues 370–395 (NLSSHSQSPKRHSISHSPSGSFNDSF) form a disordered region. Polar residues predominate over residues 384-393 (SHSPSGSFND). Position 537 is a phosphothreonine (T537). Residues S547 and S555 each carry the phosphoserine modification. Y571 is modified (phosphotyrosine). Phosphoserine occurs at positions 680, 686, and 688. The segment at 991–1014 (NLPRGKSVLSSEVSSGTEAEEEDD) is disordered. The span at 998–1007 (VLSSEVSSGT) shows a compositional bias: polar residues. PC repeat units follow at residues 1297-1325 (AAGLALGMVCLGHGSNLIGMSDLNVPEQL), 1366-1404 (GATLALAMIYLKTNNRSIADWLRAPDTMYLLDFVKPEFL), 1467-1501 (GACLSLGFRFAGSENLSAFSCLHKFAKDFMNYLSA), and 1520-1552 (LLSLAMVMAGSGNLKVLQLCRFLHMKTGGEMNY).

Belongs to the APC1 family. The mammalian APC/C is composed at least of 14 distinct subunits ANAPC1, ANAPC2, CDC27/APC3, ANAPC4, ANAPC5, CDC16/APC6, ANAPC7, CDC23/APC8, ANAPC10, ANAPC11, CDC26/APC12, ANAPC13, ANAPC15 and ANAPC16 that assemble into a complex of at least 19 chains with a combined molecular mass of around 1.2 MDa; APC/C interacts with FZR1 and FBXO5. Phosphorylated. Phosphorylation on Ser-355 occurs specifically during mitosis. In terms of tissue distribution, abundantly expressed in proliferating fibroblasts, juvenile testis, adult brain and epididymis.

It participates in protein modification; protein ubiquitination. Its function is as follows. Component of the anaphase promoting complex/cyclosome (APC/C), a cell cycle-regulated E3 ubiquitin ligase that controls progression through mitosis and the G1 phase of the cell cycle. The APC/C complex acts by mediating ubiquitination and subsequent degradation of target proteins: it mainly mediates the formation of 'Lys-11'-linked polyubiquitin chains and, to a lower extent, the formation of 'Lys-48'- and 'Lys-63'-linked polyubiquitin chains. The APC/C complex catalyzes assembly of branched 'Lys-11'-/'Lys-48'-linked branched ubiquitin chains on target proteins. The protein is Anaphase-promoting complex subunit 1 (Anapc1) of Mus musculus (Mouse).